The chain runs to 100 residues: Chorion class A protein M2774 (100 aa).

Positions 1-33 (GGGWNGWNGLGGGWNGLGVGWSRLDGGYGGGCG) are left arm. Residues 34–81 (SYGGEGIGNVGVADELPVGGVTAVGGRVPIIGGVEYGGPARAAGAVSI) form a central domain region. The right arm stretch occupies residues 82–100 (CGHCAPTCGCGRAGLGGYY).

It belongs to the chorion protein family.

Functionally, this protein is one of many from the eggshell of the silk moth. The sequence is that of Chorion class A protein M2774 from Bombyx mori (Silk moth).